Consider the following 215-residue polypeptide: Probable transaldolase (215 aa).

Lys83 serves as the catalytic Schiff-base intermediate with substrate.

Belongs to the transaldolase family. Type 3B subfamily.

It localises to the cytoplasm. It carries out the reaction D-sedoheptulose 7-phosphate + D-glyceraldehyde 3-phosphate = D-erythrose 4-phosphate + beta-D-fructose 6-phosphate. Its pathway is carbohydrate degradation; pentose phosphate pathway; D-glyceraldehyde 3-phosphate and beta-D-fructose 6-phosphate from D-ribose 5-phosphate and D-xylulose 5-phosphate (non-oxidative stage): step 2/3. Its function is as follows. Transaldolase is important for the balance of metabolites in the pentose-phosphate pathway. The polypeptide is Probable transaldolase (Heliobacterium modesticaldum (strain ATCC 51547 / Ice1)).